A 492-amino-acid polypeptide reads, in one-letter code: Probable cytosol aminopeptidase (492 aa).

Lys248 and Asp253 together coordinate Mn(2+). Lys260 is an active-site residue. Mn(2+) is bound by residues Asp271, Asp330, and Glu332. Residue Arg334 is part of the active site.

This sequence belongs to the peptidase M17 family. It depends on Mn(2+) as a cofactor.

It localises to the cytoplasm. It catalyses the reaction Release of an N-terminal amino acid, Xaa-|-Yaa-, in which Xaa is preferably Leu, but may be other amino acids including Pro although not Arg or Lys, and Yaa may be Pro. Amino acid amides and methyl esters are also readily hydrolyzed, but rates on arylamides are exceedingly low.. The enzyme catalyses Release of an N-terminal amino acid, preferentially leucine, but not glutamic or aspartic acids.. Its function is as follows. Presumably involved in the processing and regular turnover of intracellular proteins. Catalyzes the removal of unsubstituted N-terminal amino acids from various peptides. This Aeropyrum pernix (strain ATCC 700893 / DSM 11879 / JCM 9820 / NBRC 100138 / K1) protein is Probable cytosol aminopeptidase (pepA).